The sequence spans 585 residues: Arginine--tRNA ligase (585 aa).

Residues 131–141 (ANPTGPMHVGH) carry the 'HIGH' region motif.

This sequence belongs to the class-I aminoacyl-tRNA synthetase family. As to quaternary structure, monomer.

The protein localises to the cytoplasm. The enzyme catalyses tRNA(Arg) + L-arginine + ATP = L-arginyl-tRNA(Arg) + AMP + diphosphate. The polypeptide is Arginine--tRNA ligase (Sinorhizobium medicae (strain WSM419) (Ensifer medicae)).